The chain runs to 929 residues: Patatin-like phospholipase domain-containing protein CNE02340 (929 aa).

The disordered stretch occupies residues 37 to 85; it reads QPLDGDSSPLSPRSFSLPPESPQLSTASVKAPPPTWKYGPDNGTLRSGR. Residues 43 to 54 show a composition bias toward low complexity; sequence SSPLSPRSFSLP. Residues 126 to 146 traverse the membrane as a helical segment; it reads WPLLFFIFFIIYLEFSAYVIT. A PNPLA domain is found at 301-493; it reads LCLSGGASFG…REDIPLGSLH (193 aa). The GXSXG motif lies at 332–336; that stretch reads GTSAG. The Nucleophile role is filled by serine 334. Aspartate 480 (proton acceptor) is an active-site residue. Disordered regions lie at residues 644-765, 778-806, and 818-929; these read ALSH…NFGD, LSSPFRSIRSNTSSSSNNVQSPSSSQRFR, and VSES…QDGA. Composition is skewed to polar residues over residues 652-664 and 745-764; these read NDPATSLPETNPE and PTHSPIATESPQRNYTSNFG. Over residues 779 to 806 the composition is skewed to low complexity; sequence SSPFRSIRSNTSSSSNNVQSPSSSQRFR. Positions 856–878 are enriched in basic and acidic residues; the sequence is VESHSDRSEDEMLHSGANVKEEY.

It belongs to the PLPL family.

It is found in the membrane. Functionally, probable lipid hydrolase. The sequence is that of Patatin-like phospholipase domain-containing protein CNE02340 from Cryptococcus neoformans var. neoformans serotype D (strain JEC21 / ATCC MYA-565) (Filobasidiella neoformans).